Reading from the N-terminus, the 504-residue chain is Cytochrome P450 2D1 (504 aa).

Cys-446 provides a ligand contact to heme.

The protein belongs to the cytochrome P450 family. Heme serves as cofactor.

The protein localises to the endoplasmic reticulum membrane. Its subcellular location is the microsome membrane. It catalyses the reaction an organic molecule + reduced [NADPH--hemoprotein reductase] + O2 = an alcohol + oxidized [NADPH--hemoprotein reductase] + H2O + H(+). Cytochromes P450 are a group of heme-thiolate monooxygenases. In liver microsomes, this enzyme is involved in an NADPH-dependent electron transport pathway. It oxidizes a variety of structurally unrelated compounds, including steroids, fatty acids, and xenobiotics. The chain is Cytochrome P450 2D1 (Cyp2d1) from Rattus norvegicus (Rat).